We begin with the raw amino-acid sequence, 330 residues long: MLQSTKVTKSVLTNVLRVEQRRGFLLSGAAVALGSTYIFGRDAKLADAMDRGELHNKNEDYAKLRAERTEQRIKALSNNRPMEPRYEGHVPLYLHEKMLLFAISGIRAFFHPENGINIVQLGEATAFPIFLENLKQTMLADETGRRILRDQPNVRTDILDMDKLSKLPKNTFGYTFYKWLEKEKVSPDTRAPVTYIDDPIHAFVFKRYRQCHDFYHALNDLPIIIEGEIIVKALESANMGIPMATLGWMLAPLRLKKAQRDRLYGTYLPWAIKTGLTCKPLINVYWEELLEKDVEELRQELGIKMPPDLRAMRAKRKAMIKRLNEKYQKN.

The N-terminal 31 residues, 1 to 31, are a transit peptide targeting the mitochondrion; that stretch reads MLQSTKVTKSVLTNVLRVEQRRGFLLSGAAV. 4 residues coordinate Zn(2+): histidine 212, aspartate 213, histidine 216, and glutamate 228.

It belongs to the COQ4 family. Component of a multi-subunit COQ enzyme complex, composed of at least COQ3, COQ4, COQ5, COQ6, COQ7 and COQ9. It depends on Zn(2+) as a cofactor.

It localises to the mitochondrion inner membrane. It carries out the reaction a 4-hydroxy-3-methoxy-5-(all-trans-polyprenyl)benzoate + H(+) = a 2-methoxy-6-(all-trans-polyprenyl)phenol + CO2. Its pathway is cofactor biosynthesis; ubiquinone biosynthesis. Functionally, lyase that catalyzes the C1-decarboxylation of 4-hydroxy-3-methoxy-5-(all-trans-polyprenyl)benzoic acid into 2-methoxy-6-(all-trans-polyprenyl)phenol during ubiquinone biosynthesis. This Candida glabrata (strain ATCC 2001 / BCRC 20586 / JCM 3761 / NBRC 0622 / NRRL Y-65 / CBS 138) (Yeast) protein is Ubiquinone biosynthesis protein COQ4, mitochondrial.